The following is a 318-amino-acid chain: MVFFPHRHLIGIKGLTETDITYLLDKADEAVKISRQREKKTSTLRGLTQINLFFEASTRTQSSFELAGKRLGADVMNMSVGNSSVKKGETLIDTAMTLNAMHPDVLVVRHASAGAAALLSQKVACAVINAGDGQHEHPTQALLDALTIRRAKGKLSRIIVAICGDVLHSRVARSNILLLNAMGARVRVVAPATLLPSGIADMSVEVFHDMKEGLKDADVVMMLRLQRERMAGSFVPSIREYFHFYGLDAEKLKAAKEDALVMHPGPMNRGVEIASDVADGPQSVIESQVEMGVAVRMAVMESLLISDNNGPRSEGVGA.

The carbamoyl phosphate site is built by Arg-59 and Thr-60. L-aspartate is bound at residue Lys-87. Residues Arg-109, His-137, and Gln-140 each coordinate carbamoyl phosphate. Positions 170 and 224 each coordinate L-aspartate. The carbamoyl phosphate site is built by Gly-265 and Pro-266.

The protein belongs to the aspartate/ornithine carbamoyltransferase superfamily. ATCase family. As to quaternary structure, heterododecamer (2C3:3R2) of six catalytic PyrB chains organized as two trimers (C3), and six regulatory PyrI chains organized as three dimers (R2).

It carries out the reaction carbamoyl phosphate + L-aspartate = N-carbamoyl-L-aspartate + phosphate + H(+). It functions in the pathway pyrimidine metabolism; UMP biosynthesis via de novo pathway; (S)-dihydroorotate from bicarbonate: step 2/3. Functionally, catalyzes the condensation of carbamoyl phosphate and aspartate to form carbamoyl aspartate and inorganic phosphate, the committed step in the de novo pyrimidine nucleotide biosynthesis pathway. This chain is Aspartate carbamoyltransferase catalytic subunit, found in Allorhizobium ampelinum (strain ATCC BAA-846 / DSM 112012 / S4) (Agrobacterium vitis (strain S4)).